Reading from the N-terminus, the 124-residue chain is MADNLRSYLYKQLPSVEGLHAIVVTDRDGAPVIKVANDNAPEYALRPAFLSTFALATDQGSKLGLSKNKSIICYYSTYQIVQFNRLPLVISFIASSNANTGLIFSLEKELVPLIEELRQVVEVA.

Belongs to the LAMTOR3 family. As to quaternary structure, part of the Ragulator complex composed of lamtor1, lamtor2, lamtor3, lamtor4 and lamtor5. The Ragulator complex interacts with slc38a9; the probable amino acid sensor. Component of the lysosomal folliculin complex (LFC).

Its subcellular location is the late endosome membrane. In terms of biological role, as part of the Ragulator complex it is involved in amino acid sensing and activation of mTORC1, a signaling complex promoting cell growth in response to growth factors, energy levels, and amino acids. Activated by amino acids through a mechanism involving the lysosomal V-ATPase, the Ragulator plays a dual role for the small GTPases Rag (RagA/RRAGA, RagB/RRAGB, RagC/RRAGC and/or RagD/RRAGD): it (1) acts as a guanine nucleotide exchange factor (GEF), activating the small GTPases Rag and (2) mediates recruitment of Rag GTPases to the lysosome membrane. Activated Ragulator and Rag GTPases function as a scaffold recruiting mTORC1 to lysosomes where it is in turn activated. This chain is Ragulator complex protein LAMTOR3 (lamtor3), found in Danio rerio (Zebrafish).